We begin with the raw amino-acid sequence, 214 residues long: CASP-like protein UU5 (214 aa).

The segment at 1–20 is disordered; the sequence is MSTVAQDSAPGGGKIQDAME. Over 1 to 57 the chain is Cytoplasmic; that stretch reads MSTVAQDSAPGGGKIQDAMEQGAPGASSAAVVPEGGHYTQTPSPAFQAVKKNINHMS. Residues 58-78 traverse the membrane as a helical segment; it reads AFSLGLRVAEFVLSVIAFSLM. Residues 79–99 lie on the Extracellular side of the membrane; sequence ASADQNGAVYSTFTSYSFVLA. Residues 100-120 form a helical membrane-spanning segment; sequence VNVLVVFYTIGQIIMSVLLLV. Over 121–138 the chain is Cytoplasmic; sequence SGSTPKKIYLFITFGCDQ. The helical transmembrane segment at 139–159 threads the bilayer; the sequence is LSAFLLMAAGAAGASVALIIN. Residues 160 to 193 are Extracellular-facing; the sequence is RGGVTDAYGNGCIDGKITSFCSHAQASVAFTFLS. The helical transmembrane segment at 194–214 threads the bilayer; sequence FFCMVISSLLGVYSLAPYLIL.

This sequence belongs to the Casparian strip membrane proteins (CASP) family. Homodimer and heterodimers.

Its subcellular location is the cell membrane. This chain is CASP-like protein UU5, found in Physcomitrium patens (Spreading-leaved earth moss).